Reading from the N-terminus, the 37-residue chain is Large ribosomal subunit protein bL36A (37 aa).

Belongs to the bacterial ribosomal protein bL36 family.

The sequence is that of Large ribosomal subunit protein bL36A from Leifsonia xyli subsp. xyli (strain CTCB07).